The chain runs to 495 residues: Probable polyamine transporter At1g31830 (495 aa).

11 consecutive transmembrane segments (helical) span residues 49–69 (VSML…PFGV), 79–99 (LLAL…EALI), 112–132 (GYVV…QGWM), 156–176 (VPAL…TILL), 186–206 (IVGW…AVMG), 230–250 (LYLN…TLAG), 267–287 (VILV…AIPL), 357–377 (TPLL…WLSF), 380–400 (IVAA…IAFV), 417–437 (IGTT…CAVV), and 442–462 (LKVA…HPLL).

It belongs to the amino acid-polyamine-organocation (APC) superfamily. Polyamine:cation symporter (PHS) (TC 2.A.3.12) family.

The protein localises to the cell membrane. Probable cell membrane polyamine/proton symporter involved in the polyamine uptake in cells. This is Probable polyamine transporter At1g31830 from Arabidopsis thaliana (Mouse-ear cress).